Reading from the N-terminus, the 446-residue chain is MSYIKFDSSKLDKFVHANELEQMQPLVTAADKELREGTGAGKDFRGFIDLPVNYDKDEFARIKAAAKKVQGNSQVFVAIGIGGSYLGARMAVDFLSQTFRNLDPDLKFPEVYFAGNSISGTYLADLLDIIGDRDFSINVISKSGTTTEPSIAFRVLKAKLIEKYGKDGAKERIYATTDRAKGALKQEADAEGYEEFVVPDDVGGRFSVMSAVGLLPIAVAGGDIDEMMRGLGDGRKAYASADLKENEAYQYAALRNILYRKGYTTELLENYEPTLQYLGEWWKQLMGESEGKDQKGIYPSSANFSTDLHSLGQYIQEGLRNLMETVVWVEEPNRDLTIPEDANNLDGLGYLAGKKMSFVNRKAYEGVVLAHTDGGVPVMTVSIPKQDAYTLGYLIYFFEAAVSISGYLNGINPFNQPGVEAYKKNMFALLGRPGYEDMTKELNARL.

The Proton donor role is filled by E288. Residues H309 and K423 contribute to the active site.

The protein belongs to the GPI family.

The protein resides in the cytoplasm. The enzyme catalyses alpha-D-glucose 6-phosphate = beta-D-fructose 6-phosphate. Its pathway is carbohydrate biosynthesis; gluconeogenesis. It participates in carbohydrate degradation; glycolysis; D-glyceraldehyde 3-phosphate and glycerone phosphate from D-glucose: step 2/4. Its function is as follows. Catalyzes the reversible isomerization of glucose-6-phosphate to fructose-6-phosphate. This chain is Glucose-6-phosphate isomerase, found in Lacticaseibacillus casei (strain BL23) (Lactobacillus casei).